Consider the following 257-residue polypeptide: Probable enoyl-CoA hydratase (257 aa).

It belongs to the enoyl-CoA hydratase/isomerase family.

It catalyses the reaction a (3S)-3-hydroxyacyl-CoA = a (2E)-enoyl-CoA + H2O. The enzyme catalyses a 4-saturated-(3S)-3-hydroxyacyl-CoA = a (3E)-enoyl-CoA + H2O. Functionally, could possibly oxidize fatty acids using specific components. This chain is Probable enoyl-CoA hydratase (fadB1), found in Rhizobium meliloti (strain 1021) (Ensifer meliloti).